We begin with the raw amino-acid sequence, 1996 residues long: Protein Shroom3 (1996 aa).

Residues 25 to 110 (YIYLEAFLEG…TLRLVVRRDV (86 aa)) enclose the PDZ domain. The interval 150-173 (KHRRSEPAGRPHSWHTTKSGEKQP) is disordered. The residue at position 213 (Ser213) is a Phosphoserine. Disordered regions lie at residues 340 to 389 (NGQG…PARS), 437 to 468 (EKSP…TSIY), 568 to 629 (DASL…WEGD), 673 to 772 (RRHS…LQGF), and 788 to 1053 (FEQR…PESS). A phosphoserine mark is found at Ser439 and Ser443. The span at 700-718 (KAEDPGRKAAPDLGSHLDR) shows a compositional bias: basic and acidic residues. Low complexity predominate over residues 750–768 (HPHTSSLGRRGPGPGSASA). Polar residues predominate over residues 814-823 (TVSTSSTSGN). Residue Ser816 is modified to Phosphoserine. Composition is skewed to basic and acidic residues over residues 826–836 (EETKAHIRFSE) and 846–859 (QHFK…EEAS). 2 stretches are compositionally biased toward polar residues: residues 862-871 (PCGQQLSGGA) and 887-896 (RSQSTFQLSS). Ser890 carries the phosphoserine modification. The segment covering 897 to 909 (EPEREPEWRDRPG) has biased composition (basic and acidic residues). A phosphoserine mark is found at Ser910 and Ser913. One can recognise an ASD1 domain in the interval 928–1030 (IKDAQSRVLG…SEPEKMNEVG (103 aa)). Low complexity predominate over residues 950–964 (APVASRSWRPRPSSA). Ser970 bears the Phosphoserine mark. Residues 1011–1027 (LTPEQKKRSYSEPEKMN) show a composition bias toward basic and acidic residues. 2 positions are modified to phosphoserine: Ser1069 and Ser1072. 4 disordered regions span residues 1093-1115 (KTGK…LRER), 1137-1223 (SSLS…MSAE), 1315-1573 (ECPG…SFNK), and 1627-1665 (SLGG…SSED). A compositionally biased stretch (low complexity) spans 1137–1148 (SSLSSLREPSLQ). Ser1221 bears the Phosphoserine mark. Polar residues predominate over residues 1366-1375 (YCSQDGQTGR). A compositionally biased stretch (basic and acidic residues) spans 1403–1417 (CEGDGPEHGVEEGTR). At Ser1441 the chain carries Phosphoserine. The span at 1459-1472 (KQQSLPSLCSTSDP) shows a compositional bias: polar residues. Residues 1498–1515 (PPPHEDYEDEVFVRDPHP) are compositionally biased toward basic and acidic residues. Positions 1524-1536 (EPLPPPPPPPPSQ) are enriched in pro residues. Residues 1634–1649 (PIQTQSLSHDPVSGTQ) are compositionally biased toward polar residues. Basic and acidic residues predominate over residues 1651–1665 (LEKKVSPDPQKSSED). The region spanning 1669–1957 (EALAKEIVHQ…QVKCLLESLP (289 aa)) is the ASD2 domain.

This sequence belongs to the shroom family. Interacts with F-actin. Interacts with ROCK1.

It is found in the cell junction. It localises to the adherens junction. The protein localises to the cytoplasm. Its subcellular location is the cytoskeleton. The protein resides in the apical cell membrane. Its function is as follows. Controls cell shape changes in the neuroepithelium during neural tube closure. Induces apical constriction in epithelial cells by promoting the apical accumulation of F-actin and myosin II, and probably by bundling stress fibers. Induces apicobasal cell elongation by redistributing gamma-tubulin and directing the assembly of robust apicobasal microtubule arrays. The chain is Protein Shroom3 (SHROOM3) from Homo sapiens (Human).